A 369-amino-acid chain; its full sequence is DNA polymerase processivity factor (369 aa).

Positions 345–369 (IGSRKRGPSSPPFEREGKLAKVINQ) are disordered.

It belongs to the herpesviridae DNA polymerase processivity factor family. In terms of assembly, interacts with the DNA polymerase catalytic subunit. Interacts with the origin-binding protein.

The protein localises to the host nucleus. In terms of biological role, plays an essential role in viral DNA replication by acting as the polymerase accessory subunit. Associates with the viral polymerase to increase its processivity and forms high-affinity direct interactions with DNA. Facilitates the origin-binding protein UL9 loading onto DNA thus increasing its ability to assemble into a functional complex capable of unwinding duplex DNA. This is DNA polymerase processivity factor (MDV055) from Gallus gallus (Chicken).